The following is a 2570-amino-acid chain: MSPLIHDDQPYSWNAAMPIAVVGIGFRGPGDATNVENLFRMIAEGRESRIDIPKEKWNHEAFYHPDPSRFGTHNVTGGHYFQQDVSRFDAPFFNMTAAEAAALDPQQRMLLECTYEAMENSGTKMHDFVGSNTSVFVGSFCADYADVLWRDPETVPMYQCTNAGHSRANTANRVSYIYDLKGPSVTVDTACSASLVALHLGCQSLRTGDAKQALVAGCSAILSHEGMVTMSMMRLLSPEGRCYTFDERAGGYARGDGVGAILLKPLQDALDAGDTIRAVIRGTGSNQDGKTPGITMPSGTAQEALVRSVYEKIGLDPLDTSYVECHGTGTQAGDVTETSALARVFEPGRPKDEPLVIGSVKTNIGHLEGASGVAGVIKTILMLENGLILPNRNFQKGNPKILFDEWKLRVPLGVENWEISKPRRASVNSFGYGGANAHVVLENAQDYLRNHNWEFRSHTRKSATESSGTSTPSNPGPHGRLFVFSSFDEATGKKYLQSFEKYIEDRLQIADSEEFLDDLAYTLGERRTNHTWRTAVPAQSAEELLSNLREGINLGNASQTKNRKIGFVFTGQGAQWCGMGKELIDQYPVFKETIEKAGIACQKAGATFDLETELRKDPKESAINRAIYSQPLSTAVQLGLIDLLASWGVKPTSVTGHSSGEIASAYAAGALSLEDAMLVSYSRGVVSSKMAERATVPGCMMAIGMSKEEVLPIVSTLTKGKVVVACSNSPSSVTASGDLPAIDELHTVLDEKGVFNRKLVVEVAYHSHHMELVKEEYRNAISSIKVQPGNDVEFFSSVTGERASISGLGPDYWVSNMIGEVKFNDSLGRLCLETEGPSATTKKSAQRRKAKVSPVSTLIEIGPHSALAGPIKQIIQANETLNKASIKYYSALVRNKNAATTVLNLVGQLFVAGHEPSLEKVNRPTGLESHSVLIDLPPYAWNHANSYWAESRISKFYRERRFPRTDLLGVLERNSSSIEPRWRNHIRLSEIPWVRDHKIQGNIVYPAAGYLAMAIEAACQHAITVKSIPTITGYKLREVVIDSALIIPENPGEVEVAITLKSFTDSIRNPSDMWDEFVISSVNADSRWTEHCRGLVSVVAPQKVVNVIDGQAQSIAEKQGYAELVASYETKCRRNINVPQFYEQLIELGLEYGPTFANLKRAKAAPNACIGDLEIPDTAAVMPYNFQFPFVIHPATLDALFHTIFAALATANGGTLKDPAVPVSASEIFVSANITSKPGDKLATYTSTEQKDYRFMSASMTVFHESQKQQGAFEPVIEIKDLTCATLAREGADPSTDGQVTKAYNLAWKPSIDLLSQSEILELCAKTSSPEGNTNATNARELLERAAYYMLKRAVAGYAPPETNSAYAQQLWSFLKSQSRVASWKHAYDGWDQLFKADVDAFIDKVVSSSSVGKFLVEVGDKLPNLVKGENSSAEFIKELDLKVFVDNTQLFQNTQSAARYFDLLQHKTPSLSVLAVGPGSGVASLGFLALLNKKSSAPFERYEHNDVEFDIRDVVKEKFPQWAQLIGTKQVDISREIQGQEDIEPNSYDVLVAFHVLGDATGMNNVLAQSKQLLKPDGKVLFIGRPLKSLVASVLFGYVPSVLAETGSTSDRSNLSPAEIDDMVSASGYSKVTAIATSINSNNYSMMVVSASASQDTSAKPQKVHVIAEDESTSQPSLLAGLKEEGIEVTVSSLSEASPTPDHMCIVLSDLSNKTVLSDPSVQEWEALKKIMLEAKGVLWVTRGSAVTTSNPNGSMATGLSRTIRSERGDVPVVTLDLDAERTLDDAVSTDIILKVFRKSFYPAFTASEVEQEYAERKGRLLVPRLIEDEELTKTLAIATEGAKGQLEPLHQPGRPLRMFVGTPGLLDSIFWTDDDRVETPLPDDWVEMEVKASGFNFKDVMMAMGQIKVENLGWECSGILTKVGPAVTGLAVGDRVVCHASGTFCTNARVHVDNVRKIPDTMSFEIAASLPVTYVTAYHSIYNIARLQKGETILVHAATGGLGQAIIELCQLIGAEIFATVGTLDKKKFLIDHFHIPEDHIFFSRDQSFAAGIKRMTRGKGVDAVMNSLAGEGLRLSWECIAPYGRFVELGQRDIGINSRLEMGQFIKNTSFTAFNLAYMVQYNPKVANEVFTSVLNLFWKDAIKGPSPVEVYSFSDVEKAFRRMQTGGHMGKLVGTADTDAMVKVIPLDRSKSLLRSDASYVLIGGLGGIGRATALWMVEHGARNVIFVNRSGVKVDEARETIRVLEEMECKTAIFPCDITNENQVETFVGDAAKAMPPIKGVIQGAMLLRDTLFEKMSLEDYITVLRPKVQGTFNLHKYLPKDMDFFIMESSVSGIVGNASQAAYAAGNTFLDAFASYRVSQGLPATTIDLGAISGVGYLSTNSELKQAMERQGFEFTNPKRLMALIESAIRNPARPGQQAHIITGLGTWNEDSSLGALTLPMFSHFRHLSAGNADWGKSGSGNNLKSALKAAKTLDDASELILGALIDKIASRSGIGPENINTSKSMPDYGIDSLVAVEMRNWITKDMDSTLPVLELLASDPLTHLATKIAQRSRSVQVAEQTHE.

In terms of domain architecture, Ketosynthase family 3 (KS3) spans alanine 16 to asparagine 443. Catalysis depends on for beta-ketoacyl synthase activity residues cysteine 191, histidine 326, and histidine 366. The disordered stretch occupies residues histidine 458–histidine 478. Residues threonine 464–histidine 478 show a composition bias toward low complexity. The 332-residue stretch at phenylalanine 567–alanine 898 folds into the Malonyl-CoA:ACP transacylase (MAT) domain. The N-terminal hotdog fold stretch occupies residues threonine 965–lysine 1103. A PKS/mFAS DH domain is found at threonine 965–aspartate 1293. The active-site Proton acceptor; for dehydratase activity is the histidine 997. The tract at residues arginine 1133–aspartate 1293 is C-terminal hotdog fold. The Proton donor; for dehydratase activity role is filled by aspartate 1198. The methyltransferase (CMeT) domain stretch occupies residues leucine 1343–tyrosine 1645. The Enoyl reductase (ER) domain occupies glycine 1866 to glycine 2178. The Ketoreductase (KR) domain occupies alanine 2202–serine 2379. Residues aspartate 2482 to serine 2559 enclose the Carrier domain. At serine 2519 the chain carries O-(pantetheine 4'-phosphoryl)serine.

Requires pantetheine 4'-phosphate as cofactor.

It functions in the pathway secondary metabolite biosynthesis. Its function is as follows. Highly reducing polyketide synthase; part of the gene cluster that mediates the biosynthesis of the antihypercholesterolemic agents phomoidrides which are dimeric anhydrides. The pathway begins with the highly reducing polyketide synthase tstA that catalyzes the formation of a C12-fatty acyl-ACP, starting from one acetate and 5 malonate units. The hydrolase tstM is involved in the release of the C12-fatty acyl chain from tstA. The alkylcitrate synthase (ACS) tstJ and the alkylcitrate dehydratase (ACDH) tstI then give rise to decarboxylated monomeric anhydrides by coupling the C12-fatty acyl chain with oxalacetic acid. The cyclase tstC is responsible for the dimerization of the monomeric anhydrides which leads to the production of prephomoidride that contains the characteristic bicyclo[4.3.1]deca-1,6-diene system of phomoidrides. Iterative oxidation catalyzed by the alpha-ketoglutarate-dependent dioxygenase tstK produced then phomoidride A. Finally, the methyltransferase tstE converts phomoidride A to phomoidride B via an acetalization reaction. The phosphatidylethanolamine-binding protein tstB and tstN are not essential for dimerization and their functions have still to be determined. This Talaromyces stipitatus (strain ATCC 10500 / CBS 375.48 / QM 6759 / NRRL 1006) (Penicillium stipitatum) protein is Highly reducing polyketide synthase tstA.